The following is a 232-amino-acid chain: Flagellar L-ring protein (232 aa).

A signal peptide spans 1–21; it reads MQKNAAHTYAISSLLVLSLTG. Cys22 is lipidated: N-palmitoyl cysteine. A lipid anchor (S-diacylglycerol cysteine) is attached at Cys22.

The protein belongs to the FlgH family. In terms of assembly, the basal body constitutes a major portion of the flagellar organelle and consists of four rings (L,P,S, and M) mounted on a central rod.

It is found in the cell outer membrane. It localises to the bacterial flagellum basal body. Its function is as follows. Assembles around the rod to form the L-ring and probably protects the motor/basal body from shearing forces during rotation. The chain is Flagellar L-ring protein from Shigella dysenteriae serotype 1 (strain Sd197).